The following is a 617-amino-acid chain: pH-sensitive chloride channel 2 (617 aa).

The first 28 residues, 1–28 (MHSPGAAAYVFLQCLVALVAAVIAQSGA), serve as a signal peptide directing secretion. The Extracellular portion of the chain corresponds to 29–387 (DQPPTTVVEV…VHLAREMGFY (359 aa)). Asparagine 57 carries N-linked (GlcNAc...) asparagine glycosylation. The span at 82–96 (TVSVDSSSTTTVAST) shows a compositional bias: low complexity. The interval 82-110 (TVSVDSSSTTTVASTQEPTSTTERTMSPE) is disordered. A compositionally biased stretch (polar residues) spans 97-106 (QEPTSTTERT). Asparagine 130 is a glycosylation site (N-linked (GlcNAc...) asparagine). Over residues 131 to 147 (ATDDNRPDAKSSGKDSE) the composition is skewed to basic and acidic residues. The tract at residues 131-155 (ATDDNRPDAKSSGKDSECPTLEGAD) is disordered. Residues asparagine 184, asparagine 234, asparagine 351, and asparagine 370 are each glycosylated (N-linked (GlcNAc...) asparagine). A helical membrane pass occupies residues 388–408 (MMDYFIPSIMLVAISWVTFWL). Topologically, residues 409–414 (QADQSA) are cytoplasmic. A helical transmembrane segment spans residues 415–434 (PRITLGTSTMLTFITLASAQ). At 435 to 447 (GKTLPKVSYIKAS) the chain is on the extracellular side. The helical transmembrane segment at 448-468 (EIWFLGCTGFIFGSLVEFAFV) threads the bilayer. The Cytoplasmic segment spans residues 469–596 (NTIWRRKRNV…VAIWIDKRSR (128 aa)). Residues 597–617 (FVFPIAFVIFNIFYWTFVYYV) traverse the membrane as a helical segment.

It belongs to the ligand-gated ion channel (TC 1.A.9) family.

The protein localises to the cell membrane. It catalyses the reaction chloride(in) = chloride(out). Its function is as follows. Ligand and pH-gated channel that mediates chloride transport in the mid-gut and thereby may function in larval metabolism and fluid homeostasis. Channel opening is triggered by zinc binding or, to a lesser extent, an increase in extracellular pH. The chain is pH-sensitive chloride channel 2 from Anopheles gambiae (African malaria mosquito).